We begin with the raw amino-acid sequence, 99 residues long: Aspartyl/glutamyl-tRNA(Asn/Gln) amidotransferase subunit C (99 aa).

This sequence belongs to the GatC family. Heterotrimer of A, B and C subunits.

It catalyses the reaction L-glutamyl-tRNA(Gln) + L-glutamine + ATP + H2O = L-glutaminyl-tRNA(Gln) + L-glutamate + ADP + phosphate + H(+). The enzyme catalyses L-aspartyl-tRNA(Asn) + L-glutamine + ATP + H2O = L-asparaginyl-tRNA(Asn) + L-glutamate + ADP + phosphate + 2 H(+). Functionally, allows the formation of correctly charged Asn-tRNA(Asn) or Gln-tRNA(Gln) through the transamidation of misacylated Asp-tRNA(Asn) or Glu-tRNA(Gln) in organisms which lack either or both of asparaginyl-tRNA or glutaminyl-tRNA synthetases. The reaction takes place in the presence of glutamine and ATP through an activated phospho-Asp-tRNA(Asn) or phospho-Glu-tRNA(Gln). The chain is Aspartyl/glutamyl-tRNA(Asn/Gln) amidotransferase subunit C from Methylibium petroleiphilum (strain ATCC BAA-1232 / LMG 22953 / PM1).